A 237-amino-acid polypeptide reads, in one-letter code: (5-formylfuran-3-yl)methyl phosphate synthase (237 aa).

The active-site Schiff-base intermediate with substrate is the lysine 27. Lysine 85 serves as the catalytic Proton acceptor.

This sequence belongs to the MfnB family.

It carries out the reaction 2 D-glyceraldehyde 3-phosphate = 4-(hydroxymethyl)-2-furancarboxaldehyde phosphate + phosphate + 2 H2O. Its pathway is cofactor biosynthesis; methanofuran biosynthesis. Its function is as follows. Catalyzes the formation of 4-(hydroxymethyl)-2-furancarboxaldehyde phosphate (4-HFC-P) from two molecules of glyceraldehyde-3-P (GA-3-P). This Methanobrevibacter smithii (strain ATCC 35061 / DSM 861 / OCM 144 / PS) protein is (5-formylfuran-3-yl)methyl phosphate synthase.